Reading from the N-terminus, the 376-residue chain is Putative cytosolic 5'-nucleotidase 3 (376 aa).

The active-site Nucleophile is the aspartate 119. Mg(2+) contacts are provided by aspartate 119 and aspartate 121. The Proton donor role is filled by aspartate 121. Substrate contacts are provided by residues glutamate 168, serine 189, 236 to 237 (SA), and lysine 286. Residue aspartate 312 coordinates Mg(2+).

This sequence belongs to the pyrimidine 5'-nucleotidase family.

The protein resides in the cytoplasm. The catalysed reaction is a ribonucleoside 5'-phosphate + H2O = a ribonucleoside + phosphate. This chain is Putative cytosolic 5'-nucleotidase 3, found in Caenorhabditis elegans.